A 453-amino-acid polypeptide reads, in one-letter code: tRNA modification GTPase MnmE (453 aa).

(6S)-5-formyl-5,6,7,8-tetrahydrofolate-binding residues include R22, E79, and K119. In terms of domain architecture, TrmE-type G spans 215–376 (GMKVVIAGRP…LKQHLKSLMG (162 aa)). N225 serves as a coordination point for K(+). GTP contacts are provided by residues 225-230 (NAGKSS), 244-250 (TEIAGTT), 269-272 (DTAG), and 334-337 (NKAD). A Mg(2+)-binding site is contributed by S229. T244, I246, and T249 together coordinate K(+). T250 is a Mg(2+) binding site. A (6S)-5-formyl-5,6,7,8-tetrahydrofolate-binding site is contributed by K453.

This sequence belongs to the TRAFAC class TrmE-Era-EngA-EngB-Septin-like GTPase superfamily. TrmE GTPase family. In terms of assembly, homodimer. Heterotetramer of two MnmE and two MnmG subunits. The cofactor is K(+).

Its subcellular location is the cytoplasm. Functionally, exhibits a very high intrinsic GTPase hydrolysis rate. Involved in the addition of a carboxymethylaminomethyl (cmnm) group at the wobble position (U34) of certain tRNAs, forming tRNA-cmnm(5)s(2)U34. The chain is tRNA modification GTPase MnmE from Shewanella frigidimarina (strain NCIMB 400).